The following is a 156-amino-acid chain: Succinate dehydrogenase assembly factor 2-B, mitochondrial (156 aa).

A mitochondrion-targeting transit peptide spans 1-12 (MLRQILSSAVAK).

This sequence belongs to the SDHAF2 family. As to quaternary structure, interacts with the flavoprotein subunit within the SDH catalytic dimer.

Its subcellular location is the mitochondrion matrix. Plays an essential role in the assembly of succinate dehydrogenase (SDH), an enzyme complex (also referred to as respiratory complex II) that is a component of both the tricarboxylic acid (TCA) cycle and the mitochondrial electron transport chain, and which couples the oxidation of succinate to fumarate with the reduction of ubiquinone (coenzyme Q) to ubiquinol. Required for flavinylation (covalent attachment of FAD) of the flavoprotein subunit of the SDH catalytic dimer. This Drosophila willistoni (Fruit fly) protein is Succinate dehydrogenase assembly factor 2-B, mitochondrial.